Reading from the N-terminus, the 354-residue chain is Uroporphyrinogen decarboxylase (354 aa).

Substrate contacts are provided by residues 27-31 (RQAGR), aspartate 77, tyrosine 154, threonine 209, and histidine 327.

This sequence belongs to the uroporphyrinogen decarboxylase family. Homodimer.

It is found in the cytoplasm. The enzyme catalyses uroporphyrinogen III + 4 H(+) = coproporphyrinogen III + 4 CO2. Its pathway is porphyrin-containing compound metabolism; protoporphyrin-IX biosynthesis; coproporphyrinogen-III from 5-aminolevulinate: step 4/4. In terms of biological role, catalyzes the decarboxylation of four acetate groups of uroporphyrinogen-III to yield coproporphyrinogen-III. The protein is Uroporphyrinogen decarboxylase of Escherichia coli O17:K52:H18 (strain UMN026 / ExPEC).